The following is a 254-amino-acid chain: Probable glutathione transferase omega-2 (254 aa).

The GST N-terminal domain occupies 25–105; that stretch reads GTIRIYNMRY…YLDDIYPEPR (81 aa). Catalysis depends on C35, which acts as the Nucleophile. Glutathione-binding positions include K62, V75, and 89 to 90; that span reads ES. The 130-residue stretch at 110-239 folds into the GST C-terminal domain; sequence DHYEKVQQKL…SQPTETAVEF (130 aa).

Belongs to the GST superfamily. Omega family.

The catalysed reaction is RX + glutathione = an S-substituted glutathione + a halide anion + H(+). It carries out the reaction L-dehydroascorbate + 2 glutathione = glutathione disulfide + L-ascorbate. It catalyses the reaction methylarsonate + 2 glutathione + H(+) = methylarsonous acid + glutathione disulfide + H2O. Exhibits glutathione-dependent thiol transferase activity. Has dehydroascorbate reductase activity and may contribute to the recycling of ascorbic acid. Participates in the biotransformation of inorganic arsenic and reduces monomethylarsonic acid (MMA). This chain is Probable glutathione transferase omega-2 (gsto-2), found in Caenorhabditis elegans.